Consider the following 374-residue polypeptide: Alanine racemase (374 aa).

Lys-35 (proton acceptor; specific for D-alanine) is an active-site residue. Residue Lys-35 is modified to N6-(pyridoxal phosphate)lysine. Arg-130 is a binding site for substrate. Tyr-253 functions as the Proton acceptor; specific for L-alanine in the catalytic mechanism. Met-305 contacts substrate.

It belongs to the alanine racemase family. Pyridoxal 5'-phosphate serves as cofactor.

The catalysed reaction is L-alanine = D-alanine. Its pathway is amino-acid biosynthesis; D-alanine biosynthesis; D-alanine from L-alanine: step 1/1. Functionally, catalyzes the interconversion of L-alanine and D-alanine. May also act on other amino acids. The sequence is that of Alanine racemase (alr) from Ralstonia pickettii (strain 12J).